Here is a 197-residue protein sequence, read N- to C-terminus: Recombination protein RecR (197 aa).

The segment at 56–71 (CERCNTFTETEICQRC) adopts a C4-type zinc-finger fold. A Toprim domain is found at 79–174 (SLLCVVEMPA…RVSRLSRGVP (96 aa)).

This sequence belongs to the RecR family.

In terms of biological role, may play a role in DNA repair. It seems to be involved in an RecBC-independent recombinational process of DNA repair. It may act with RecF and RecO. The sequence is that of Recombination protein RecR from Aromatoleum aromaticum (strain DSM 19018 / LMG 30748 / EbN1) (Azoarcus sp. (strain EbN1)).